The chain runs to 233 residues: uncharacterized protein (233 aa).

2 disordered regions span residues 1–159 (MGKH…NEKL) and 181–206 (MGVK…QDKM). A compositionally biased stretch (basic and acidic residues) spans 36–115 (RDRSRSPHKE…RRDDKNRLSA (80 aa)). The segment covering 135 to 148 (SSSSNTTDTASSSS) has biased composition (low complexity). Basic and acidic residues predominate over residues 189–206 (PTDDSSRLSDEKNRQDKM).

This is an uncharacterized protein from Caenorhabditis elegans.